A 264-amino-acid polypeptide reads, in one-letter code: 3-methyl-2-oxobutanoate hydroxymethyltransferase (264 aa).

Mg(2+) contacts are provided by Asp45 and Asp84. 3-methyl-2-oxobutanoate contacts are provided by residues 45-46, Asp84, and Lys112; that span reads DS. Glu114 contacts Mg(2+). Catalysis depends on Glu181, which acts as the Proton acceptor.

Belongs to the PanB family. As to quaternary structure, homodecamer; pentamer of dimers. Requires Mg(2+) as cofactor.

It is found in the cytoplasm. It catalyses the reaction 3-methyl-2-oxobutanoate + (6R)-5,10-methylene-5,6,7,8-tetrahydrofolate + H2O = 2-dehydropantoate + (6S)-5,6,7,8-tetrahydrofolate. It participates in cofactor biosynthesis; (R)-pantothenate biosynthesis; (R)-pantoate from 3-methyl-2-oxobutanoate: step 1/2. In terms of biological role, catalyzes the reversible reaction in which hydroxymethyl group from 5,10-methylenetetrahydrofolate is transferred onto alpha-ketoisovalerate to form ketopantoate. This Shewanella denitrificans (strain OS217 / ATCC BAA-1090 / DSM 15013) protein is 3-methyl-2-oxobutanoate hydroxymethyltransferase.